Here is a 945-residue protein sequence, read N- to C-terminus: Netrin receptor UNC5B (945 aa).

A signal peptide spans Met-1 to Ala-26. Residues Gly-27–Tyr-377 are Extracellular-facing. Positions Pro-48–Tyr-145 constitute an Ig-like domain. 9 disulfide bridges follow: Cys-69/Cys-130, Cys-81/Cys-128, Cys-174/Cys-225, Cys-258/Cys-295, Cys-262/Cys-299, Cys-273/Cys-285, Cys-314/Cys-348, Cys-318/Cys-353, and Cys-326/Cys-338. The 96-residue stretch at Arg-147 to Ile-242 folds into the Ig-like C2-type domain. Residue Asn-222 is glycosylated (N-linked (GlcNAc...) asparagine). TSP type-1 domains are found at residues Asn-246–Pro-300 and Asp-302–Met-354. N-linked (GlcNAc...) asparagine glycosylation is present at Asn-347. The chain crosses the membrane as a helical span at residues Ala-378 to Val-398. Topologically, residues Tyr-399–Cys-945 are cytoplasmic. Residue Cys-403 is the site of S-palmitoyl cysteine attachment. The 144-residue stretch at Ser-543–Ser-686 folds into the ZU5 domain. Phosphotyrosine is present on Tyr-581. The segment at Arg-689–Thr-838 is UPA domain. The interaction with DCC stretch occupies residues Ser-707–Lys-725. One can recognise a Death domain in the interval Lys-865–Gly-943.

It belongs to the unc-5 family. Interacts with the cytoplasmic part of DCC. Interacts with GNAI2 via its cytoplasmic part. Interacts (via death domain) with DAPK1 (via death domain). Interacts (via extracellular domain) with FLRT3 (via extracellular domain); the interaction is direct. Interacts (via extracellular domain) with FLRT2 and FLRT3 (via extracellular domain), but has higher affinity for FLRT3. Identified in a complex with FLRT3 and ADGRL3; does not interact with ADGRL3 by itself. In terms of processing, phosphorylated on cytoplasmic tyrosine residues. Post-translationally, proteolytically cleaved by caspases during apoptosis. The cleavage does not take place when the receptor is associated with netrin ligand. Its cleavage by caspases is required to induce apoptosis. Palmitoylation is required for pro-apoptotic activity, but not for location at lipid rafts. As to expression, highly expressed in brain. Also expressed at lower level in developing lung, cartilage, kidney and hematopoietic and immune tissues.

The protein resides in the cell membrane. Its subcellular location is the membrane raft. Functionally, receptor for netrin required for axon guidance. Mediates axon repulsion of neuronal growth cones in the developing nervous system upon ligand binding. Axon repulsion in growth cones may be caused by its association with DCC that may trigger signaling for repulsion. Functions as a netrin receptor that negatively regulates vascular branching during angiogenesis. Mediates retraction of tip cell filopodia on endothelial growth cones in response to netrin. It also acts as a dependence receptor required for apoptosis induction when not associated with netrin ligand. Mediates apoptosis by activating DAPK1. In the absence of NTN1, activates DAPK1 by reducing its autoinhibitory phosphorylation at Ser-308 thereby increasing its catalytic activity. In Homo sapiens (Human), this protein is Netrin receptor UNC5B (UNC5B).